Reading from the N-terminus, the 193-residue chain is MTRLVLASGSRWRRQLLDRLELPYAWAAPDIDETPHPRESPQALVHRLALGKATALAGEYPDHLIIGSDQVCLFDDQILGKPGDAATARANLQRFSGQRVRFLTGIAVIDTAHARHWVDHERYDVIFRDLSETEIAHYVDREQPLDSAGSFRMEGLGITLFERLEGRDPNTLIGLPLIRLCEMLREAGLDPLG.

The active-site Proton acceptor is the Asp69.

It belongs to the Maf family. YceF subfamily. The cofactor is a divalent metal cation.

The protein localises to the cytoplasm. It carries out the reaction N(7)-methyl-GTP + H2O = N(7)-methyl-GMP + diphosphate + H(+). Functionally, nucleoside triphosphate pyrophosphatase that hydrolyzes 7-methyl-GTP (m(7)GTP). May have a dual role in cell division arrest and in preventing the incorporation of modified nucleotides into cellular nucleic acids. The protein is 7-methyl-GTP pyrophosphatase of Chromohalobacter salexigens (strain ATCC BAA-138 / DSM 3043 / CIP 106854 / NCIMB 13768 / 1H11).